The chain runs to 485 residues: Anthranilate synthase component I-like protein (485 aa).

L-tryptophan-binding positions include Ser-69 and Pro-271–Ala-273. Gly-306 to Thr-307 lines the chorismate pocket. Glu-333 contributes to the Mg(2+) binding site. Chorismate is bound by residues Arg-441, Gly-455–Gly-457, and Gly-457. Residue Glu-470 coordinates Mg(2+).

It belongs to the anthranilate synthase component I family. In terms of assembly, tetramer of two components I and two components II. Requires Mg(2+) as cofactor.

It carries out the reaction chorismate + L-glutamine = anthranilate + pyruvate + L-glutamate + H(+). The protein operates within amino-acid biosynthesis; L-tryptophan biosynthesis; L-tryptophan from chorismate: step 1/5. The polypeptide is Anthranilate synthase component I-like protein (trpE2) (Synechocystis sp. (strain ATCC 27184 / PCC 6803 / Kazusa)).